Consider the following 301-residue polypeptide: GTPase Era (301 aa).

In terms of domain architecture, Era-type G spans 7–175 (YCGFIAIVGR…AGIVRKHLPE (169 aa)). Positions 15-22 (GRPNVGKS) are G1. 15–22 (GRPNVGKS) lines the GTP pocket. The segment at 41–45 (QTTRH) is G2. The tract at residues 62-65 (DTPG) is G3. Residues 62–66 (DTPGL) and 124–127 (NKVD) each bind GTP. Residues 124-127 (NKVD) are G4. The interval 154 to 156 (ISA) is G5. In terms of domain architecture, KH type-2 spans 206–283 (LGAELPYSVT…HLELWVKVKS (78 aa)).

Belongs to the TRAFAC class TrmE-Era-EngA-EngB-Septin-like GTPase superfamily. Era GTPase family. Monomer.

Its subcellular location is the cytoplasm. It localises to the cell inner membrane. Its function is as follows. An essential GTPase that binds both GDP and GTP, with rapid nucleotide exchange. Plays a role in 16S rRNA processing and 30S ribosomal subunit biogenesis and possibly also in cell cycle regulation and energy metabolism. The chain is GTPase Era from Salmonella agona (strain SL483).